The sequence spans 316 residues: ATP synthase gamma chain (316 aa).

Belongs to the ATPase gamma chain family. In terms of assembly, F-type ATPases have 2 components, CF(1) - the catalytic core - and CF(0) - the membrane proton channel. CF(1) has five subunits: alpha(3), beta(3), gamma(1), delta(1), epsilon(1). CF(0) has three main subunits: a, b and c.

Its subcellular location is the cellular thylakoid membrane. Functionally, produces ATP from ADP in the presence of a proton gradient across the membrane. The gamma chain is believed to be important in regulating ATPase activity and the flow of protons through the CF(0) complex. The chain is ATP synthase gamma chain from Prochlorococcus marinus (strain MIT 9313).